The sequence spans 834 residues: Protein kintoun (834 aa).

4 disordered regions span residues 214–239 (TAEE…KQEP), 374–415 (SRED…SVAP), 547–669 (KGKV…STGR), and 759–834 (KKNQ…EMDD). S378 carries the phosphoserine modification. Over residues 389–398 (PVEEDPDGEL) the composition is skewed to acidic residues. Positions 552–571 (AKKDNAPLDVKFERNQEGHA) are enriched in basic and acidic residues. The segment covering 582-596 (EEEEDKENQDQEPES) has biased composition (acidic residues). Positions 597-607 (DQQQQQQVQNK) are enriched in low complexity. 2 stretches are compositionally biased toward basic residues: residues 608 to 619 (KPGKKQRKKNKK) and 759 to 773 (KKNQ…RAQQ). Phosphoserine is present on S777. Positions 785–798 (EETRGSALKQEENP) are enriched in basic and acidic residues.

This sequence belongs to the PIH1 family. Kintoun subfamily. As to quaternary structure, interacts with Pp1alpha-96A, Pp1-87B, Pp1-13C and flw.

The protein resides in the cytoplasm. Its function is as follows. Required for cytoplasmic pre-assembly of axonemal dyneins, thereby playing a central role in motility in cilia and flagella. Involved in pre-assembly of dynein arm complexes in the cytoplasm before intraflagellar transport loads them for the ciliary compartment. The protein is Protein kintoun of Drosophila melanogaster (Fruit fly).